The sequence spans 669 residues: Soluble guanylate cyclase 89Db (669 aa).

His104 contacts heme. A coiled-coil region spans residues 430-458 (QHCSKLEIMFEKEEQRSDELEKSLELADS). The region spanning 494–620 (SVIFIEVMNI…DTVNTASRME (127 aa)) is the Guanylate cyclase domain.

The protein belongs to the adenylyl cyclase class-4/guanylyl cyclase family. Heterodimer; with Gyc88E, in the presence of magnesium or manganese. Heme serves as cofactor. Expressed in embryos in a segmental pattern in the ventral nerve cord (VNC) and in the brain, beginning at stage 13 and continuing through to stage 17. Colocalized with Gyc-89Db in several peripheral neurons that innervate trachea, basiconical sensilla and the sensory cones in the posterior segments of the embryo. Expression in wandering 3rd instar larvae is most prominent in a small cluster of cells located in the anterior medial region of each brain lobe. In the VNC, expression is found in scattered cells both laterally and at the midline.

The protein resides in the cytoplasm. It catalyses the reaction GTP = 3',5'-cyclic GMP + diphosphate. Probably not activated by nitric oxide (NO). Heterodimer exhibits some stimulation, compounds (SIN-1 and two of the NONOates) that were ineffective at stimulating Gyc-88E homodimer did stimulate the heterodimer. In terms of biological role, heterodimers with Gyc88E are activated in response to changing oxygen concentrations, alerting flies to hypoxic environments. Under normal oxygen concentrations, oxygen binds to the heme group and results in low levels of guanylyl cyclase activity. When exposed to reduced oxygen concentrations, the oxygen dissociates from the heme group resulting in activation of the enzyme. The sequence is that of Soluble guanylate cyclase 89Db from Drosophila melanogaster (Fruit fly).